The chain runs to 563 residues: DEAD-box ATP-dependent RNA helicase 25 (563 aa).

Positions 21–57 are disordered; the sequence is KKLTSDEDGSGKLVKDNNKSLKRGREGKSDVDEPLIK. The span at 23 to 56 shows a compositional bias: basic and acidic residues; sequence LTSDEDGSGKLVKDNNKSLKRGREGKSDVDEPLI. A Phosphoserine modification is found at Ser25. The Q motif signature appears at 80 to 108; sequence TRFDQFPLSPLTLKGIEDAGFKTMTVVQE. The Helicase ATP-binding domain maps to 111–294; sequence LPLILQGKDI…HVALKRDHEF (184 aa). 124 to 131 is an ATP binding site; it reads AKTGTGKT. A DEAD box motif is present at residues 242–245; the sequence is DEAD. Residues 328–479 enclose the Helicase C-terminal domain; it reads LLKKHITDNV…AVKKVQKGLI (152 aa).

This sequence belongs to the DEAD box helicase family.

The catalysed reaction is ATP + H2O = ADP + phosphate + H(+). The polypeptide is DEAD-box ATP-dependent RNA helicase 25 (RH25) (Arabidopsis thaliana (Mouse-ear cress)).